Here is a 238-residue protein sequence, read N- to C-terminus: MKKTVVASTLAVGLGVTGFAAGNSADASEQGVDKAQLAQQAQSNPESLNAAPVQDGAYDINFNYNNTDYSFQSDGQYWTWSYGQGSTNAPAQETAEQPQLVEQPQQTEQASTEQPAQEAAPQTEETQQPQQEATTQTTSSSNESTSNESSSSEASEGSSVNVNSHLQAIAQRESGGDLKAVNPSSGAAGKYQFLQSTWDSVAPSEYQGVSPTEAPEAVQDAAAVKLYNTAGASQWVTA.

Positions 1–27 (MKKTVVASTLAVGLGVTGFAAGNSADA) are cleaved as a signal peptide. The segment covering 87-97 (TNAPAQETAEQ) has biased composition (polar residues). Residues 87–161 (TNAPAQETAE…SEASEGSSVN (75 aa)) are disordered. Positions 102–156 (EQPQQTEQASTEQPAQEAAPQTEETQQPQQEATTQTTSSSNESTSNESSSSEASE) are enriched in low complexity.

This sequence belongs to the transglycosylase family. SceD subfamily.

The protein resides in the secreted. In terms of biological role, is able to cleave peptidoglycan and affects clumping and separation of bacterial cells. The sequence is that of Probable transglycosylase SceD 1 (sceD1) from Staphylococcus saprophyticus subsp. saprophyticus (strain ATCC 15305 / DSM 20229 / NCIMB 8711 / NCTC 7292 / S-41).